The primary structure comprises 289 residues: Phosphatidylserine decarboxylase proenzyme (289 aa).

Catalysis depends on charge relay system; for autoendoproteolytic cleavage activity residues Asp-92, His-149, and Ser-254. Ser-254 acts as the Schiff-base intermediate with substrate; via pyruvic acid; for decarboxylase activity in catalysis. The residue at position 254 (Ser-254) is a Pyruvic acid (Ser); by autocatalysis.

Belongs to the phosphatidylserine decarboxylase family. PSD-B subfamily. Prokaryotic type I sub-subfamily. As to quaternary structure, heterodimer of a large membrane-associated beta subunit and a small pyruvoyl-containing alpha subunit. Pyruvate is required as a cofactor. Post-translationally, is synthesized initially as an inactive proenzyme. Formation of the active enzyme involves a self-maturation process in which the active site pyruvoyl group is generated from an internal serine residue via an autocatalytic post-translational modification. Two non-identical subunits are generated from the proenzyme in this reaction, and the pyruvate is formed at the N-terminus of the alpha chain, which is derived from the carboxyl end of the proenzyme. The autoendoproteolytic cleavage occurs by a canonical serine protease mechanism, in which the side chain hydroxyl group of the serine supplies its oxygen atom to form the C-terminus of the beta chain, while the remainder of the serine residue undergoes an oxidative deamination to produce ammonia and the pyruvoyl prosthetic group on the alpha chain. During this reaction, the Ser that is part of the protease active site of the proenzyme becomes the pyruvoyl prosthetic group, which constitutes an essential element of the active site of the mature decarboxylase.

The protein resides in the cell membrane. It catalyses the reaction a 1,2-diacyl-sn-glycero-3-phospho-L-serine + H(+) = a 1,2-diacyl-sn-glycero-3-phosphoethanolamine + CO2. Its pathway is phospholipid metabolism; phosphatidylethanolamine biosynthesis; phosphatidylethanolamine from CDP-diacylglycerol: step 2/2. In terms of biological role, catalyzes the formation of phosphatidylethanolamine (PtdEtn) from phosphatidylserine (PtdSer). This chain is Phosphatidylserine decarboxylase proenzyme, found in Pseudomonas aeruginosa (strain LESB58).